The chain runs to 231 residues: Transcriptional regulator NRG1 (231 aa).

The residue at position 163 (serine 163) is a Phosphoserine. C2H2-type zinc fingers lie at residues 174–196 (YICK…NRIH) and 202–226 (HCCP…YRTH).

It localises to the nucleus. Transcriptional repressor involved in regulation of glucose repression. Binds to UAS-1 in the STA1 promoter. The sequence is that of Transcriptional regulator NRG1 (NRG1) from Saccharomyces cerevisiae (strain ATCC 204508 / S288c) (Baker's yeast).